A 358-amino-acid chain; its full sequence is Aminomethyltransferase (358 aa).

This sequence belongs to the GcvT family. In terms of assembly, the glycine cleavage system is composed of four proteins: P, T, L and H.

It catalyses the reaction N(6)-[(R)-S(8)-aminomethyldihydrolipoyl]-L-lysyl-[protein] + (6S)-5,6,7,8-tetrahydrofolate = N(6)-[(R)-dihydrolipoyl]-L-lysyl-[protein] + (6R)-5,10-methylene-5,6,7,8-tetrahydrofolate + NH4(+). Its function is as follows. The glycine cleavage system catalyzes the degradation of glycine. This chain is Aminomethyltransferase, found in Francisella tularensis subsp. tularensis (strain FSC 198).